The primary structure comprises 284 residues: Tryptophan 2,3-dioxygenase (284 aa).

Residues 53–57 and Arg-119 each bind substrate; that span reads FIIQH. His-242 is a binding site for heme. A substrate-binding site is contributed by Thr-256.

The protein belongs to the tryptophan 2,3-dioxygenase family. In terms of assembly, homotetramer. The cofactor is heme.

It catalyses the reaction L-tryptophan + O2 = N-formyl-L-kynurenine. The protein operates within amino-acid degradation; L-tryptophan degradation via kynurenine pathway; L-kynurenine from L-tryptophan: step 1/2. It functions in the pathway siderophore biosynthesis; quinolobactin biosynthesis. Its function is as follows. Heme-dependent dioxygenase that catalyzes the oxidative cleavage of the L-tryptophan (L-Trp) pyrrole ring and converts L-tryptophan to N-formyl-L-kynurenine. Catalyzes the oxidative cleavage of the indole moiety. Required for synthesis of the siderophore quinolobactin. The chain is Tryptophan 2,3-dioxygenase from Pseudomonas fluorescens.